The sequence spans 363 residues: Phosphoserine aminotransferase (363 aa).

Arg-42 contributes to the L-glutamate binding site. Pyridoxal 5'-phosphate is bound by residues 76-77 (GR), Trp-102, Thr-156, Asp-175, and Gln-198. At Lys-199 the chain carries N6-(pyridoxal phosphate)lysine. A pyridoxal 5'-phosphate-binding site is contributed by 240–241 (NT).

The protein belongs to the class-V pyridoxal-phosphate-dependent aminotransferase family. SerC subfamily. As to quaternary structure, homodimer. The cofactor is pyridoxal 5'-phosphate.

The protein localises to the cytoplasm. It carries out the reaction O-phospho-L-serine + 2-oxoglutarate = 3-phosphooxypyruvate + L-glutamate. The enzyme catalyses 4-(phosphooxy)-L-threonine + 2-oxoglutarate = (R)-3-hydroxy-2-oxo-4-phosphooxybutanoate + L-glutamate. It participates in amino-acid biosynthesis; L-serine biosynthesis; L-serine from 3-phospho-D-glycerate: step 2/3. It functions in the pathway cofactor biosynthesis; pyridoxine 5'-phosphate biosynthesis; pyridoxine 5'-phosphate from D-erythrose 4-phosphate: step 3/5. Functionally, catalyzes the reversible conversion of 3-phosphohydroxypyruvate to phosphoserine and of 3-hydroxy-2-oxo-4-phosphonooxybutanoate to phosphohydroxythreonine. The polypeptide is Phosphoserine aminotransferase (Shewanella frigidimarina (strain NCIMB 400)).